The chain runs to 201 residues: Outer-membrane lipoprotein LolB (201 aa).

A signal peptide spans 1 to 18; it reads MKWCRLSIILMSLILLAG. A lipid anchor (N-palmitoyl cysteine) is attached at Cys-19. Cys-19 carries the S-diacylglycerol cysteine lipid modification.

This sequence belongs to the LolB family. In terms of assembly, monomer.

Its subcellular location is the cell outer membrane. Plays a critical role in the incorporation of lipoproteins in the outer membrane after they are released by the LolA protein. The sequence is that of Outer-membrane lipoprotein LolB from Nitrosococcus oceani (strain ATCC 19707 / BCRC 17464 / JCM 30415 / NCIMB 11848 / C-107).